We begin with the raw amino-acid sequence, 548 residues long: Glucose-6-phosphate isomerase (548 aa).

Catalysis depends on E354, which acts as the Proton donor. Active-site residues include H385 and K513.

Belongs to the GPI family.

The protein resides in the cytoplasm. The catalysed reaction is alpha-D-glucose 6-phosphate = beta-D-fructose 6-phosphate. The protein operates within carbohydrate biosynthesis; gluconeogenesis. Its pathway is carbohydrate degradation; glycolysis; D-glyceraldehyde 3-phosphate and glycerone phosphate from D-glucose: step 2/4. In terms of biological role, catalyzes the reversible isomerization of glucose-6-phosphate to fructose-6-phosphate. The chain is Glucose-6-phosphate isomerase from Marinomonas sp. (strain MWYL1).